Reading from the N-terminus, the 1472-residue chain is Type IV pilus biogenesis factor PilY1 homolog PD_1611 (1472 aa).

Residues Asp-1170, Asp-1172, Asp-1174, Leu-1176, and Asp-1178 each contribute to the Ca(2+) site. The span at 1383–1397 shows a compositional bias: polar residues; it reads RGSRSSIGNSDTGAV. Residues 1383 to 1403 form a disordered region; it reads RGSRSSIGNSDTGAVSTGGDA.

Belongs to the PilY1 family.

It is found in the fimbrium. In terms of biological role, one of the three PilY1 homologs of X.fastidiosa, which are involved in bacterial twitching motility as component of the filamentous type IV pili (T4P). The twitching motility of this protein is enhanced by calcium, which may provide the bacterium an adaptive advantage in environments with high calcium concentrations. This Xylella fastidiosa (strain Temecula1 / ATCC 700964) protein is Type IV pilus biogenesis factor PilY1 homolog PD_1611.